Here is a 503-residue protein sequence, read N- to C-terminus: T-complex protein 11 homolog (503 aa).

Residues 1–22 (MPDVKESVPPKYPGDSEGRSCK) are compositionally biased toward basic and acidic residues. Disordered stretches follow at residues 1–42 (MPDV…PPPF) and 254–285 (DLTM…NPEP). Low complexity predominate over residues 263 to 285 (PDTSDSSSVAGPSPNEAANNPEP). A helical transmembrane segment spans residues 330 to 349 (LTVMASVLLVASSFSGSVLF).

This sequence belongs to the TCP11 family. As to quaternary structure, found in a complex at least composed of MROH2B, PRKACA isoform 2 and TCP11. Interacts with MROH2B. Interacts with PRKACA isoform 2. Isoform 2 and isoform 3 interact with ODF1 (via leucine zipper motif). Post-translationally, constitutively phosphorylated on serine, threonine and tyrosine residues within the head and tail regions of noncapacitated spermatozoa. Phosphorylation on tyrosine residues increases upon sperm capacitation within the acrosomal region in a protein kinase A (PKA)-dependent signaling pathway. As to expression, isoform 2 and isoform 3 are expressed in sperm. Isoform 1 is not detected in sperm (at protein level). Testis-specific. Isoform 1, isoform 2 and isoform 3 are expressed in sperm.

The protein resides in the membrane. It is found in the cell projection. The protein localises to the cilium. Its subcellular location is the flagellum. It localises to the cytoplasmic vesicle. The protein resides in the secretory vesicle. It is found in the acrosome. In terms of biological role, plays a role in the process of sperm capacitation and acrosome reactions. Probable receptor for the putative fertilization-promoting peptide (FPP) at the sperm membrane that may modulate the activity of the adenylyl cyclase cAMP pathway. This chain is T-complex protein 11 homolog (TCP11), found in Homo sapiens (Human).